Reading from the N-terminus, the 163-residue chain is Ribonuclease P protein subunit p25-like protein (163 aa).

Disordered stretches follow at residues 1–22 (MEHYRKAGSVELPAPSPMPQLP) and 129–163 (NECGYQPPGAPPGLGSMPSSSCGPRSRRRARDTRS). A compositionally biased stretch (low complexity) spans 143–152 (GSMPSSSCGP). Over residues 153–163 (RSRRRARDTRS) the composition is skewed to basic residues.

Belongs to the histone-like Alba family.

It is found in the nucleus. Its function is as follows. May be a component of ribonuclease P or MRP. The polypeptide is Ribonuclease P protein subunit p25-like protein (RPP25L) (Homo sapiens (Human)).